The following is a 197-amino-acid chain: Putative eggshell protein (197 aa).

A signal peptide spans 1-17 (MKFHLVLLLAIVPLTLA).

In Fasciola hepatica (Liver fluke), this protein is Putative eggshell protein.